Consider the following 347-residue polypeptide: Protein RecA (347 aa).

Position 68–75 (68–75 (GPESSGKT)) interacts with ATP.

Belongs to the RecA family.

Its subcellular location is the cytoplasm. Can catalyze the hydrolysis of ATP in the presence of single-stranded DNA, the ATP-dependent uptake of single-stranded DNA by duplex DNA, and the ATP-dependent hybridization of homologous single-stranded DNAs. It interacts with LexA causing its activation and leading to its autocatalytic cleavage. This Mycobacterium sp. (strain JLS) protein is Protein RecA.